Consider the following 1121-residue polypeptide: uncharacterized protein (1121 aa).

The disordered stretch occupies residues 179–198; that stretch reads GPGECQSVHNQSSGSGSNSY. 6 N-linked (GlcNAc...) asparagine; by host glycosylation sites follow: Asn188, Asn325, Asn351, Asn449, Asn561, and Asn615. 2 disordered regions span residues 649-684 and 701-734; these read KRIH…RIHN and STRQ…TDSD. Over residues 701–715 the composition is skewed to polar residues; sequence STRQDASGGSSSGTK. N-linked (GlcNAc...) asparagine; by host glycosylation is found at Asn838, Asn911, Asn914, and Asn980.

This sequence belongs to the herpesviridae US22 family.

This is an uncharacterized protein from Homo sapiens (Human).